Reading from the N-terminus, the 182-residue chain is Inner membrane assembly complex subunit 17 (182 aa).

The N-terminal 45 residues, 1–45 (MLKRRSNALITLSRTKLFPITTVAYYHRRLLNQQRRAVSTSPKKE), are a transit peptide targeting the mitochondrion. Residues 46-107 (IKSLEDLANL…EIPVKRFIRP (62 aa)) lie on the Mitochondrial matrix side of the membrane. A helical transmembrane segment spans residues 108-127 (LWMFILMGSSVYLLLHFSWW). The stretch at 128–158 (KLEHEERESQLKKEVEILEHQLNELIVQDKT) forms a coiled coil. The Mitochondrial intermembrane segment spans residues 128 to 182 (KLEHEERESQLKKEVEILEHQLNELIVQDKTHNTSRGKGSNESTHMKPWYRRWFW).

This sequence belongs to the INA17 family. As to quaternary structure, component of the inner membrane assembly (INA) complex, composed of INA17 and INA22. Interacts with a subset of F(1)F(0)-ATP synthase subunits of the F(1)-domain and the peripheral stalk.

It is found in the mitochondrion inner membrane. Functionally, component of the INA complex (INAC) that promotes the biogenesis of mitochondrial F(1)F(0)-ATP synthase. INAC facilitates the assembly of the peripheral stalk and promotes the assembly of the catalytic F(1)-domain with the membrane-embedded F(0)-domain. The protein is Inner membrane assembly complex subunit 17 of Saccharomyces cerevisiae (strain RM11-1a) (Baker's yeast).